A 75-amino-acid chain; its full sequence is uncharacterized protein (75 aa).

Residues 1 to 18 form the signal peptide; that stretch reads MRKYLSARSMCCSFFSCA.

This is an uncharacterized protein from Treponema pallidum (strain Nichols).